Here is a 184-residue protein sequence, read N- to C-terminus: Ras-related protein Rap-1b (184 aa).

10–17 (GSGGVGKS) contributes to the GTP binding site. Residues 32–40 (YDPTIEDSY) carry the Effector region motif. Residues 57–61 (DTAGT) and 116–119 (NKCD) each bind GTP. Cysteine 181 carries the cysteine methyl ester modification. Cysteine 181 carries S-geranylgeranyl cysteine lipidation. The propeptide at 182–184 (HLL) is removed in mature form.

It belongs to the small GTPase superfamily. Ras family.

The protein localises to the cell membrane. Its subcellular location is the cytoplasm. It is found in the cytosol. It localises to the cell junction. The enzyme catalyses GTP + H2O = GDP + phosphate + H(+). Probable GTP-binding protein that possesses GTPase activity. May play a role in endothelial cell polarity and endothelial barrier function. The sequence is that of Ras-related protein Rap-1b (rap1b) from Xenopus laevis (African clawed frog).